The chain runs to 170 residues: MPRLQKNDNFIDKTFTVLADIILKILPTTKEEKQAFCYYRDGMSAQSEGEYAEALENYYEALRLEEDPYDRSYIIYNIGLIYASNGEHIKALEYYHQSLELNPRLPQAFNNIAIIYHYQGLKAADKQDNNMSKSMFDKAAEYWKQAIYLAPNNYIEAQNWLKTTGRLNNK.

3 TPR repeats span residues alanine 35 to proline 68, serine 72 to leucine 105, and glycine 120 to asparagine 153.

It belongs to the Ycf3 family.

It is found in the plastid. The protein resides in the chloroplast thylakoid membrane. Functionally, essential for the assembly of the photosystem I (PSI) complex. May act as a chaperone-like factor to guide the assembly of the PSI subunits. The polypeptide is Photosystem I assembly protein Ycf3 (Gracilaria tenuistipitata var. liui (Red alga)).